Consider the following 158-residue polypeptide: NAD(P)H-quinone oxidoreductase subunit J, chloroplastic (158 aa).

Belongs to the complex I 30 kDa subunit family. NDH is composed of at least 16 different subunits, 5 of which are encoded in the nucleus.

The protein localises to the plastid. It is found in the chloroplast thylakoid membrane. It carries out the reaction a plastoquinone + NADH + (n+1) H(+)(in) = a plastoquinol + NAD(+) + n H(+)(out). It catalyses the reaction a plastoquinone + NADPH + (n+1) H(+)(in) = a plastoquinol + NADP(+) + n H(+)(out). In terms of biological role, NDH shuttles electrons from NAD(P)H:plastoquinone, via FMN and iron-sulfur (Fe-S) centers, to quinones in the photosynthetic chain and possibly in a chloroplast respiratory chain. The immediate electron acceptor for the enzyme in this species is believed to be plastoquinone. Couples the redox reaction to proton translocation, and thus conserves the redox energy in a proton gradient. This chain is NAD(P)H-quinone oxidoreductase subunit J, chloroplastic, found in Aethionema grandiflorum (Persian stone-cress).